The chain runs to 513 residues: Zinc finger protein RFP (513 aa).

The RING-type zinc finger occupies cysteine 16–arginine 57. Cysteine 96, histidine 99, cysteine 118, and histidine 124 together coordinate Zn(2+). Residues cysteine 96–histidine 127 form a B box-type zinc finger. 2 coiled-coil regions span residues leucine 132–leucine 172 and glutamine 282–alanine 311. One can recognise a B30.2/SPRY domain in the interval methionine 298–methionine 492.

The protein belongs to the TRIM/RBCC family. Homomultimerizes. Part of a complex consisting of TRIM27, USP7 and MAGEL2; directly interacts with USP7. Interacts with PML, EIF3S6, EPC1, CHD4 and EID1. Interacts with MAGED4, MAGEF1 and MAGEL2. Interacts with PTPN11. Interacts with autophagy receptor p62/SQSTM1. In terms of assembly, (Microbial infection) Interacts with M.tuberculosis PtpA, whick blocks TRIM27-promoted JNK/p38 MAPK pathway activation and cell apoptosis. As to quaternary structure, (Microbial infection) Interacts with herpes simplex virus protein ICP0. In terms of tissue distribution, expressed in testis namely within the seminiferous tubules.

The protein localises to the nucleus. The protein resides in the cytoplasm. It is found in the PML body. Its subcellular location is the early endosome. It localises to the mitochondrion. The catalysed reaction is S-ubiquitinyl-[E2 ubiquitin-conjugating enzyme]-L-cysteine + [acceptor protein]-L-lysine = [E2 ubiquitin-conjugating enzyme]-L-cysteine + N(6)-ubiquitinyl-[acceptor protein]-L-lysine.. It participates in protein modification; protein ubiquitination. Functionally, E3 ubiquitin-protein ligase that mediates ubiquitination of various substrates and thereby plays a role in diffent processes including proliferation, innate immunity, apoptosis, immune response or autophagy. Ubiquitinates PIK3C2B and inhibits its activity by mediating the formation of 'Lys-48'-linked polyubiquitin chains; the function inhibits CD4 T-cell activation. Acts as a regulator of retrograde transport: together with MAGEL2, mediates the formation of 'Lys-63'-linked polyubiquitin chains at 'Lys-220' of WASHC1, leading to promote endosomal F-actin assembly. Has a transcriptional repressor activity by cooperating with EPC1. Induces apoptosis by activating Jun N-terminal kinase and p38 kinase and also increases caspase-3-like activity independently of mitochondrial events. May function in male germ cell development. Has DNA-binding activity and preferentially bound to double-stranded DNA. Forms a complex with and ubiquitinates the ubiquitin-specific protease USP7, which in turn deubiquitinates RIPK1 resulting in the positive regulation of TNF-alpha-induced apoptosis. In addition, acts with USP7 or PTPN11 as an inhibitor of the antiviral signaling pathway by promoting kinase TBK1 ubiquitination and degradation. Acts as a negative regulator of NOD2 signaling by mediating ubiquitination of NOD2, promoting its degradation by the proteasome. Alternatively, facilitates mitophagy via stabilization of active TBK1. Negatively regulates autophagy flux under basal conditions by directly polyubiquitinating ULK1. During starvation-induced autophagy, catalyzes non-degradative ubiquitination of the kinase STK38L promoting its activation and phosphorylation of ULK1 leading to its ubiquitination and degradation to restrain the amplitude and duration of autophagy. In terms of biological role, (Microbial infection) Positively regulates hepatitis C virus replication by suppressing type I IFN response during infection. The polypeptide is Zinc finger protein RFP (Homo sapiens (Human)).